Reading from the N-terminus, the 367-residue chain is MEAERLNAIESSLLDLRNRAGELRGYLDYDAKAARLTEVNKELEDPNVWNDSKNAQALGREKKLLEGVVTTLTALDSDLRDALDLFELAREEGDEDTLLASEEDAAKLEARVGDIEFRRMFSNPADPNNCFIDIQAGAGGTEACDWASMLLRQYLRYCERKGFKAEVLEESDGDVAGIKNATVKVTGEYAYGFLRTETGIHRLVRKSPFDSSGGRHTSFSSVFVYPEIDDSIEVEINPADLRIDTYRASGAGGQHINKTDSAVRITHMPTGIVVQCQNDRSQHRNRAEAMAMLKSRLYEVEMRKRQAEQDKLESSKTDVGWGHQIRSYVLDQSRVKDLRTNVEMSNTRAVLDGDLDDFISASLKQGV.

The residue at position 254 (Q254) is an N5-methylglutamine.

Belongs to the prokaryotic/mitochondrial release factor family. Post-translationally, methylated by PrmC. Methylation increases the termination efficiency of RF2.

The protein localises to the cytoplasm. Its function is as follows. Peptide chain release factor 2 directs the termination of translation in response to the peptide chain termination codons UGA and UAA. The chain is Peptide chain release factor 2 from Burkholderia cenocepacia (strain ATCC BAA-245 / DSM 16553 / LMG 16656 / NCTC 13227 / J2315 / CF5610) (Burkholderia cepacia (strain J2315)).